Here is a 904-residue protein sequence, read N- to C-terminus: MICAL-like protein 2 (904 aa).

Residues 1 to 107 (MAAIRALQQW…YVSQYYNYFH (107 aa)) form the Calponin-homology (CH) domain. The segment at 1 to 260 (MAAIRALQQW…KLTGLVPRQP (260 aa)) is forms an intramolecular interaction with the C-terminal coiled coil domain keeping the protein in a closed conformation. 3 positions are modified to phosphoserine: Ser-110, Ser-143, and Ser-153. Positions 117-178 (GVKRASEDSE…GGPPPKTDQA (62 aa)) are disordered. The segment covering 143–153 (SPAPARKPPLS) has biased composition (pro residues). In terms of domain architecture, LIM zinc-binding spans 186-248 (STCGVCGKHV…TSHLPAAASA (63 aa)). Ser-249 carries the phosphoserine modification. The disordered stretch occupies residues 251–722 (KLTGLVPRQP…PANVPALPGE (472 aa)). Residues 261-388 (GAMGVDSRTS…GGAPRVAAPQ (128 aa)) form a necessary and sufficient for interaction with actinins region. The tract at residues 261 to 697 (GAMGVDSRTS…EARVQSWKEE (437 aa)) is mediates targeting to the cell plasma membrane. Residues 267–277 (SRTSCSPQKAQ) are compositionally biased toward polar residues. Composition is skewed to low complexity over residues 293–314 (NSPA…ATSV) and 349–362 (SSAA…ASHP). Phosphoserine is present on Ser-294. Residues 363–374 (AVPPSAPDPRPA) are compositionally biased toward pro residues. The span at 385–400 (AAPQTTLSSSSTSAAT) shows a compositional bias: low complexity. The segment covering 408–433 (PSASRTQQARNKFFQTSAVPPGTSLS) has biased composition (polar residues). Over residues 459 to 480 (ALSALEEAGAPAPGRPSPATAA) the composition is skewed to low complexity. Phosphoserine occurs at positions 494 and 504. Composition is skewed to low complexity over residues 520–534 (LSTS…LPPA) and 542–553 (SSGVGRVGAGSR). Positions 564-578 (KSTTLTQDMSTSLQE) are enriched in polar residues. Residues 593–622 (PVDRRSPAERTLKPKEPRALAEPRAGEAPR) show a composition bias toward basic and acidic residues. Ser-598 carries the phosphoserine modification. Thr-644 is subject to Phosphothreonine. Residues 647 to 661 (PASPGPSLPARSPSP) show a composition bias toward pro residues. Ser-649, Ser-658, Ser-660, and Ser-726 each carry phosphoserine. Residues 698-807 (EKKPHLQGKP…LMYKSKAQRL (110 aa)) form a forms an intramolecular interaction with the N-terminal Calponin-homology and LIM zinc-binding domains-containing region keeping the protein in a closed conformation region. In terms of domain architecture, bMERB spans 723-874 (TVTSPVRLHP…EQEEDQMLRD (152 aa)). Residues 735–771 (LSPEEIQRQLQDIERRLDALELRGVELEKRLRAAEGD) are a coiled coil. Residues 807–903 (LEEQQLDIEG…WSPKSKSSPS (97 aa)) form a mediates interaction with RAB13 and is required for transition from the closed to the opened conformation region.

As to quaternary structure, interacts with RAB13 (GTP-bound form); competes with RAB8A and is involved in tight junctions assembly. Interacts with RAB8A; competes with RAB13 and is involved in E-cadherin endocytic recycling. Interacts with RAB8B. Interacts (preferentially in opened conformation) with ACTN1 and ACTN4; stimulated by RAB13 activation. Interacts (via calponin-homology (CH) domain) with the filamins FLNA, FLNB and FLNC (via actin-binding domain).

It is found in the cell membrane. Its subcellular location is the cell junction. The protein localises to the tight junction. The protein resides in the recycling endosome. It localises to the cell projection. It is found in the cytoplasm. Its subcellular location is the cytoskeleton. In terms of biological role, effector of small Rab GTPases which is involved in junctional complexes assembly through the regulation of cell adhesion molecules transport to the plasma membrane and actin cytoskeleton reorganization. Regulates the endocytic recycling of occludins, claudins and E-cadherin to the plasma membrane and may thereby regulate the establishment of tight junctions and adherens junctions. In parallel, may regulate actin cytoskeleton reorganization directly through interaction with F-actin or indirectly through actinins and filamins. Most probably involved in the processes of epithelial cell differentiation, cell spreading and neurite outgrowth. Undergoes liquid-liquid phase separation to form tubular recycling endosomes. Plays 2 sequential roles in the biogenesis of tubular recycling endosomes: first organizes phase separation and then the closed form formed by interaction with RAB8A promotes endosomal tubulation. This is MICAL-like protein 2 from Homo sapiens (Human).